The chain runs to 115 residues: Cyclin-dependent protein kinase inhibitor SMR3 (115 aa).

Residues 17–36 are compositionally biased toward basic and acidic residues; that stretch reads KIRLPTRPELDIPDSDHEDP. A disordered region spans residues 17-82; the sequence is KIRLPTRPEL…RSSGTKRKLT (66 aa). The segment covering 67–81 has biased composition (basic residues); it reads RKPKPNRSSGTKRKL.

As to quaternary structure, interacts with CDKA-1 and D-type cyclins. As to expression, expressed at low levels in roots and stems.

It localises to the nucleus. Functionally, probable cyclin-dependent protein kinase (CDK) inhibitor that functions as a repressor of mitosis in the endoreduplication cell cycle. The polypeptide is Cyclin-dependent protein kinase inhibitor SMR3 (Arabidopsis thaliana (Mouse-ear cress)).